Here is a 1159-residue protein sequence, read N- to C-terminus: WASH complex subunit 5 (1159 aa).

Serine 917 carries the phosphoserine modification.

It belongs to the strumpellin family. As to quaternary structure, component of the WASH core complex also described as WASH regulatory complex (SHRC) composed of WASH (WASHC1, WASH2P or WASH3P), WASHC2 (WASHC2A or WASHC2C), WASHC3, WASHC4 and WASHC5. The WASH core complex associates via WASHC2 with the F-actin-capping protein dimer (formed by CAPZA1, CAPZA2 or CAPZA3 and CAPZB) in a transient or substoichiometric manner which was initially described as WASH complex. Interacts with VCP, PI4K2A. Expressed ubiquitously.

The protein localises to the cytoplasm. It localises to the cytosol. The protein resides in the endoplasmic reticulum. Its subcellular location is the early endosome. Its function is as follows. Acts as a component of the WASH core complex that functions as a nucleation-promoting factor (NPF) at the surface of endosomes, where it recruits and activates the Arp2/3 complex to induce actin polymerization, playing a key role in the fission of tubules that serve as transport intermediates during endosome sorting. May be involved in axonal outgrowth. Involved in cellular localization of ADRB2. Involved in cellular trafficking of BLOC-1 complex cargos such as ATP7A and VAMP7. This chain is WASH complex subunit 5, found in Homo sapiens (Human).